Reading from the N-terminus, the 159-residue chain is Nucleoside diphosphate kinase (159 aa).

ATP-binding residues include Lys13, Phe61, Arg89, Thr95, Arg106, and Asn116. His119 serves as the catalytic Pros-phosphohistidine intermediate.

The protein belongs to the NDK family. It depends on Mg(2+) as a cofactor.

The protein localises to the cytoplasm. The enzyme catalyses a 2'-deoxyribonucleoside 5'-diphosphate + ATP = a 2'-deoxyribonucleoside 5'-triphosphate + ADP. It carries out the reaction a ribonucleoside 5'-diphosphate + ATP = a ribonucleoside 5'-triphosphate + ADP. Functionally, major role in the synthesis of nucleoside triphosphates other than ATP. The ATP gamma phosphate is transferred to the NDP beta phosphate via a ping-pong mechanism, using a phosphorylated active-site intermediate. This Halorubrum lacusprofundi (strain ATCC 49239 / DSM 5036 / JCM 8891 / ACAM 34) protein is Nucleoside diphosphate kinase.